The following is a 572-amino-acid chain: Glypican-5 (572 aa).

An N-terminal signal peptide occupies residues 1-24 (MDARTWRLGWRCLLLLALLGSTRS). N-linked (GlcNAc...) asparagine glycans are attached at residues N120 and N237. The O-linked (Xyl...) (glycosaminoglycan) serine glycan is linked to S486. N493 carries an N-linked (GlcNAc...) asparagine glycan. O-linked (Xyl...) (glycosaminoglycan) serine glycosylation is found at S495, S507, and S509. Residue N527 is glycosylated (N-linked (GlcNAc...) asparagine).

The protein belongs to the glypican family.

It localises to the cell membrane. It is found in the secreted. The protein localises to the extracellular space. Its function is as follows. Cell surface proteoglycan that bears heparan sulfate. The chain is Glypican-5 (Gpc5) from Mus musculus (Mouse).